We begin with the raw amino-acid sequence, 353 residues long: Protein RecA (353 aa).

68 to 75 (GPESSGKT) provides a ligand contact to ATP.

It belongs to the RecA family.

It is found in the cytoplasm. Functionally, can catalyze the hydrolysis of ATP in the presence of single-stranded DNA, the ATP-dependent uptake of single-stranded DNA by duplex DNA, and the ATP-dependent hybridization of homologous single-stranded DNAs. It interacts with LexA causing its activation and leading to its autocatalytic cleavage. In Roseiflexus castenholzii (strain DSM 13941 / HLO8), this protein is Protein RecA.